The chain runs to 188 residues: Elongation factor P (188 aa).

Lysine 34 is modified (N6-(3,6-diaminohexanoyl)-5-hydroxylysine).

It belongs to the elongation factor P family. Post-translationally, may be beta-lysylated on the epsilon-amino group of Lys-34 by the combined action of EpmA and EpmB, and then hydroxylated on the C5 position of the same residue by EpmC (if this protein is present). Lysylation is critical for the stimulatory effect of EF-P on peptide-bond formation. The lysylation moiety may extend toward the peptidyltransferase center and stabilize the terminal 3-CCA end of the tRNA. Hydroxylation of the C5 position on Lys-34 may allow additional potential stabilizing hydrogen-bond interactions with the P-tRNA.

The protein resides in the cytoplasm. It participates in protein biosynthesis; polypeptide chain elongation. Involved in peptide bond synthesis. Alleviates ribosome stalling that occurs when 3 or more consecutive Pro residues or the sequence PPG is present in a protein, possibly by augmenting the peptidyl transferase activity of the ribosome. Modification of Lys-34 is required for alleviation. The sequence is that of Elongation factor P from Sodalis glossinidius (strain morsitans).